Consider the following 412-residue polypeptide: Sterol-4-alpha-carboxylate 3-dehydrogenase erg26, decarboxylating (412 aa).

Residues 17 to 23, 89 to 90, and 111 to 113 each bind NADP(+); these read GGCGFLG, DI, and TAT. Substrate-binding residues include serine 158 and tyrosine 188. NADP(+)-binding positions include tyrosine 188, lysine 192, and 217–220; that span reads PAGI. The active-site Proton donor is the lysine 192.

The protein belongs to the 3-beta-HSD family. In terms of assembly, heterotetramer of erg25, erg26, erg27 and erg28. Erg28 acts as a scaffold to tether erg27 and other 4,4-demethylation-related enzymes, forming a demethylation enzyme complex, in the endoplasmic reticulum.

The protein resides in the endoplasmic reticulum membrane. Its pathway is steroid metabolism; ergosterol biosynthesis. Sterol-C4-methyl oxidase; part of the third module of ergosterol biosynthesis pathway that includes the late steps of the pathway. Erg26 is a catalytic component of the C-4 demethylation complex that catalyzes the conversion of 4,4-dimethylfecosterol into fecosterol via 4-methylfecosterol. The third module or late pathway involves the ergosterol synthesis itself through consecutive reactions that mainly occur in the endoplasmic reticulum (ER) membrane. Firstly, the squalene synthase erg9 catalyzes the condensation of 2 farnesyl pyrophosphate moieties to form squalene, which is the precursor of all steroids. Squalene synthase is crucial for balancing the incorporation of farnesyl diphosphate (FPP) into sterol and nonsterol isoprene synthesis. Secondly, squalene is converted into lanosterol by the consecutive action of the squalene epoxidase erg1 and the lanosterol synthase erg7. Then, the delta(24)-sterol C-methyltransferase erg6 methylates lanosterol at C-24 to produce eburicol. Eburicol is the substrate of the sterol 14-alpha demethylase encoded by cyp51A and cyp51B, to yield 4,4,24-trimethyl ergosta-8,14,24(28)-trienol. The C-14 reductase erg24 then reduces the C14=C15 double bond which leads to 4,4-dimethylfecosterol. A sequence of further demethylations at C-4, involving the C-4 demethylation complex containing the C-4 methylsterol oxidases erg25A or erg25B, the sterol-4-alpha-carboxylate 3-dehydrogenase erg26 and the 3-keto-steroid reductase erg27, leads to the production of fecosterol via 4-methylfecosterol. The C-8 sterol isomerase erg2 then catalyzes the reaction which results in unsaturation at C-7 in the B ring of sterols and thus converts fecosterol to episterol. The sterol-C5-desaturase erg3B then catalyzes the introduction of a C-5 double bond in the B ring to produce 5-dehydroepisterol. The 2 other sterol-C5-desaturases, erg3A and erg3C, seem to be less important in ergosterol biosynthesis. The C-22 sterol desaturase erg5 further converts 5-dehydroepisterol into ergosta-5,7,22,24(28)-tetraen-3beta-ol by forming the C-22(23) double bond in the sterol side chain. Finally, ergosta-5,7,22,24(28)-tetraen-3beta-ol is substrate of the C-24(28) sterol reductases erg4A and erg4B to produce ergosterol. Possible alternative sterol biosynthetic pathways might exist from fecosterol to ergosterol, depending on the activities of the erg3 isoforms. The chain is Sterol-4-alpha-carboxylate 3-dehydrogenase erg26, decarboxylating from Aspergillus fumigatus (strain ATCC MYA-4609 / CBS 101355 / FGSC A1100 / Af293) (Neosartorya fumigata).